The chain runs to 263 residues: 3'-5' ssDNA/RNA exonuclease TatD (263 aa).

The a divalent metal cation site is built by glutamate 91, histidine 127, and histidine 152.

The protein belongs to the metallo-dependent hydrolases superfamily. TatD-type hydrolase family. TatD subfamily. As to quaternary structure, monomer. Mg(2+) serves as cofactor.

The protein localises to the cytoplasm. Its function is as follows. 3'-5' exonuclease that prefers single-stranded DNA and RNA. May play a role in the H(2)O(2)-induced DNA damage repair. The chain is 3'-5' ssDNA/RNA exonuclease TatD from Klebsiella pneumoniae (strain 342).